A 319-amino-acid polypeptide reads, in one-letter code: Olfactory receptor 10Q1 (319 aa).

Topologically, residues 1–29 (MPVGKLVFNQSEPTEFVFRAFTTATEFQV) are extracellular. Residue Asn-9 is glycosylated (N-linked (GlcNAc...) asparagine). Residues 30–50 (LLFLLFLLLYLMILCGNTAII) form a helical membrane-spanning segment. The Cytoplasmic portion of the chain corresponds to 51-58 (WVVCTHST). The helical transmembrane segment at 59–79 (LRTPMYFFLSNLSFLELCYTT) threads the bilayer. Over 80-103 (VVVPLMLSNILGAQKPISLAGCGA) the chain is Extracellular. An intrachain disulfide couples Cys-101 to Cys-194. Residues 104-124 (QMFFFVTLGSTDCFLLAIMAY) form a helical membrane-spanning segment. At 125–143 (DRYVAICHPLHYTLIMTRE) the chain is on the cytoplasmic side. The chain crosses the membrane as a helical span at residues 144–164 (LCTQMLGGALGLALFPSLQLT). The Extracellular portion of the chain corresponds to 165 to 202 (ALIFTLPFCGHHQEINHFLCDVPPVLRLACADIRVHQA). Residues 203-222 (VLYVVSILVLTIPFLLICVS) traverse the membrane as a helical segment. Topologically, residues 223–242 (YVFITCAILSIRSAEGRRRA) are cytoplasmic. The helical transmembrane segment at 243 to 263 (FSTCSFHLTVVLLQYGCCSLV) threads the bilayer. The Extracellular portion of the chain corresponds to 264-276 (YLRPRSSTSEDED). The helical transmembrane segment at 277-297 (SQIALVYTFVTPLLNPLLYSL) threads the bilayer. Residues 298-319 (RNKDVKGALRSAIIRKAASDAN) are Cytoplasmic-facing.

This sequence belongs to the G-protein coupled receptor 1 family.

The protein localises to the cell membrane. Odorant receptor. This Homo sapiens (Human) protein is Olfactory receptor 10Q1 (OR10Q1).